The primary structure comprises 527 residues: Outer capsid protein VP5 (527 aa).

Positions 1–42 (MGKFIKQLSKFGKKVGGALTSNTAKKIYKTIGDTAVRFAESD) are involved in membrane permeabilization.

It belongs to the orbivirus VP5 family.

The protein resides in the virion. Its function is as follows. VP5 protein is one of the two proteins (with VP2) which constitute the virus particle outer capsid. Acts as a membrane permeabilization protein that mediates release of viral particles from endosomal compartments into the cytoplasm. Permeabilization activity is probably negatively regulated by VP2 and is triggered by endosomal degradation of VP2 and exposure to low pH. The protein is Outer capsid protein VP5 (Segment-6) of Antilocapra americana (Pronghorn).